We begin with the raw amino-acid sequence, 729 residues long: Fatty acid oxidation complex subunit alpha (729 aa).

An enoyl-CoA hydratase/isomerase region spans residues methionine 1–lysine 189. Aspartate 296 is a binding site for substrate. The segment at glutamate 311–alanine 729 is 3-hydroxyacyl-CoA dehydrogenase. Residues methionine 324, aspartate 343, valine 400–glutamate 402, lysine 407, and serine 429 each bind NAD(+). The active-site For 3-hydroxyacyl-CoA dehydrogenase activity is the histidine 450. Asparagine 453 is a binding site for NAD(+). 2 residues coordinate substrate: asparagine 500 and tyrosine 660.

In the N-terminal section; belongs to the enoyl-CoA hydratase/isomerase family. This sequence in the C-terminal section; belongs to the 3-hydroxyacyl-CoA dehydrogenase family. As to quaternary structure, heterotetramer of two alpha chains (FadB) and two beta chains (FadA).

The catalysed reaction is a (3S)-3-hydroxyacyl-CoA + NAD(+) = a 3-oxoacyl-CoA + NADH + H(+). It catalyses the reaction a (3S)-3-hydroxyacyl-CoA = a (2E)-enoyl-CoA + H2O. The enzyme catalyses a 4-saturated-(3S)-3-hydroxyacyl-CoA = a (3E)-enoyl-CoA + H2O. It carries out the reaction (3S)-3-hydroxybutanoyl-CoA = (3R)-3-hydroxybutanoyl-CoA. The catalysed reaction is a (3Z)-enoyl-CoA = a 4-saturated (2E)-enoyl-CoA. It catalyses the reaction a (3E)-enoyl-CoA = a 4-saturated (2E)-enoyl-CoA. The protein operates within lipid metabolism; fatty acid beta-oxidation. Involved in the aerobic and anaerobic degradation of long-chain fatty acids via beta-oxidation cycle. Catalyzes the formation of 3-oxoacyl-CoA from enoyl-CoA via L-3-hydroxyacyl-CoA. It can also use D-3-hydroxyacyl-CoA and cis-3-enoyl-CoA as substrate. In Escherichia fergusonii (strain ATCC 35469 / DSM 13698 / CCUG 18766 / IAM 14443 / JCM 21226 / LMG 7866 / NBRC 102419 / NCTC 12128 / CDC 0568-73), this protein is Fatty acid oxidation complex subunit alpha.